The sequence spans 278 residues: Tryptophan synthase alpha chain (278 aa).

Residues Glu-50 and Asp-61 each act as proton acceptor in the active site.

This sequence belongs to the TrpA family. In terms of assembly, tetramer of two alpha and two beta chains.

The catalysed reaction is (1S,2R)-1-C-(indol-3-yl)glycerol 3-phosphate + L-serine = D-glyceraldehyde 3-phosphate + L-tryptophan + H2O. The protein operates within amino-acid biosynthesis; L-tryptophan biosynthesis; L-tryptophan from chorismate: step 5/5. Its function is as follows. The alpha subunit is responsible for the aldol cleavage of indoleglycerol phosphate to indole and glyceraldehyde 3-phosphate. This chain is Tryptophan synthase alpha chain, found in Rhodopseudomonas palustris (strain TIE-1).